Reading from the N-terminus, the 156-residue chain is ATP synthase subunit b (156 aa).

Residues 11–31 (AIAFILFVWFCMKYVWPPLMA) form a helical membrane-spanning segment.

It belongs to the ATPase B chain family. F-type ATPases have 2 components, F(1) - the catalytic core - and F(0) - the membrane proton channel. F(1) has five subunits: alpha(3), beta(3), gamma(1), delta(1), epsilon(1). F(0) has three main subunits: a(1), b(2) and c(10-14). The alpha and beta chains form an alternating ring which encloses part of the gamma chain. F(1) is attached to F(0) by a central stalk formed by the gamma and epsilon chains, while a peripheral stalk is formed by the delta and b chains.

The protein localises to the cell inner membrane. F(1)F(0) ATP synthase produces ATP from ADP in the presence of a proton or sodium gradient. F-type ATPases consist of two structural domains, F(1) containing the extramembraneous catalytic core and F(0) containing the membrane proton channel, linked together by a central stalk and a peripheral stalk. During catalysis, ATP synthesis in the catalytic domain of F(1) is coupled via a rotary mechanism of the central stalk subunits to proton translocation. Its function is as follows. Component of the F(0) channel, it forms part of the peripheral stalk, linking F(1) to F(0). The protein is ATP synthase subunit b of Salmonella gallinarum (strain 287/91 / NCTC 13346).